The following is a 346-amino-acid chain: Ribonucleoside-diphosphate reductase subunit beta (346 aa).

Fe cation contacts are provided by Glu89, Glu120, and His123. Tyr129 is an active-site residue. 3 residues coordinate Fe cation: Glu193, Glu227, and His230.

The protein belongs to the ribonucleoside diphosphate reductase small chain family. In terms of assembly, tetramer of two alpha and two beta subunits. The cofactor is Fe cation.

It carries out the reaction a 2'-deoxyribonucleoside 5'-diphosphate + [thioredoxin]-disulfide + H2O = a ribonucleoside 5'-diphosphate + [thioredoxin]-dithiol. Functionally, provides the precursors necessary for DNA synthesis. Catalyzes the biosynthesis of deoxyribonucleotides from the corresponding ribonucleotides. The protein is Ribonucleoside-diphosphate reductase subunit beta (nrdB) of Chlamydia muridarum (strain MoPn / Nigg).